The chain runs to 233 residues: 5'-methylthioadenosine/S-adenosylhomocysteine nucleosidase (233 aa).

The active-site Proton acceptor is the Glu-12. Substrate-binding positions include Gly-78, Ile-152, and 173–174 (ME). The active-site Proton donor is Asp-197.

This sequence belongs to the PNP/UDP phosphorylase family. MtnN subfamily. As to quaternary structure, homodimer.

It carries out the reaction S-adenosyl-L-homocysteine + H2O = S-(5-deoxy-D-ribos-5-yl)-L-homocysteine + adenine. It catalyses the reaction S-methyl-5'-thioadenosine + H2O = 5-(methylsulfanyl)-D-ribose + adenine. The catalysed reaction is 5'-deoxyadenosine + H2O = 5-deoxy-D-ribose + adenine. Its pathway is amino-acid biosynthesis; L-methionine biosynthesis via salvage pathway; S-methyl-5-thio-alpha-D-ribose 1-phosphate from S-methyl-5'-thioadenosine (hydrolase route): step 1/2. Its function is as follows. Catalyzes the irreversible cleavage of the glycosidic bond in both 5'-methylthioadenosine (MTA) and S-adenosylhomocysteine (SAH/AdoHcy) to adenine and the corresponding thioribose, 5'-methylthioribose and S-ribosylhomocysteine, respectively. Also cleaves 5'-deoxyadenosine, a toxic by-product of radical S-adenosylmethionine (SAM) enzymes, into 5-deoxyribose and adenine. Thus, is required for in vivo function of the radical SAM enzymes biotin synthase and lipoic acid synthase, that are inhibited by 5'-deoxyadenosine accumulation. The polypeptide is 5'-methylthioadenosine/S-adenosylhomocysteine nucleosidase (Yersinia pestis bv. Antiqua (strain Antiqua)).